The sequence spans 541 residues: Zinc finger protein 503 (541 aa).

Polar residues predominate over residues 1–18 (MSNSPLGSGSRISHFTTE). Disordered regions lie at residues 1 to 49 (MSNS…QAGR) and 97 to 255 (TCSQ…SSSV). Residues 137-157 (AEDKSSFKPYSKHPDKKDQSA) are compositionally biased toward basic and acidic residues. A compositionally biased stretch (low complexity) spans 236 to 255 (SLSAAPSPTPASSSSSSSSV). The segment at 411-439 (HVCNWVSATGPCDKRFSSSEELLGHLRTH) adopts a C2H2-type zinc-finger fold. Positions 474-511 (GASPGPLTLRSPHHHPLGLSSSRYHPYSKSPLPSGGAP) are disordered.

This sequence belongs to the Elbow/Noc family.

The protein localises to the nucleus. Its function is as follows. May function as a transcriptional repressor. This Xenopus tropicalis (Western clawed frog) protein is Zinc finger protein 503 (znf503).